The chain runs to 182 residues: Interferon gamma 1 (182 aa).

The signal sequence occupies residues 1 to 21 (MIAQNMTIFFWGVCLLTSGWA). Asn93 is a glycosylation site (N-linked (GlcNAc...) asparagine).

It belongs to the type II (or gamma) interferon family. In terms of assembly, homodimer. As to expression, highly expressed in spleen. Also detected at lower levels in brain, gill, kidney, heart, intestine and muscle. In immune cell populations, has highest expression in peripheral blood leukocytes and splenocytes. Detected in kidney-derived monocytes, neutrophils, macrophages and leukocytes.

It is found in the secreted. Its function is as follows. Cytokine which binds to interferon gamma receptor 1-like (ifngr1l). Has activating effects on primary macrophages and neutrophils. Induces nitric oxide production and phagocytic responses in macrophages. Primes macrophages and neutrophils for production of reactive oxygen intermediates (ROI). Stimulates phosphorylation and nuclear localization of the JAK/STAT signal transducer stat1. Promotes increased expression of a number of genes important for macrophage activity, including the interferon regulatory factors irf1, irf2, irf8 and irf9. This chain is Interferon gamma 1, found in Carassius auratus (Goldfish).